We begin with the raw amino-acid sequence, 229 residues long: Small ribosomal subunit protein uS3 (229 aa).

The KH type-2 domain maps to 39–107; that stretch reads VRQFLIKELK…PAQINISEVR (69 aa).

It belongs to the universal ribosomal protein uS3 family. Part of the 30S ribosomal subunit. Forms a tight complex with proteins S10 and S14.

In terms of biological role, binds the lower part of the 30S subunit head. Binds mRNA in the 70S ribosome, positioning it for translation. This Photobacterium profundum (strain SS9) protein is Small ribosomal subunit protein uS3.